The following is a 250-amino-acid chain: Iron-sulfur assembly protein 1 (250 aa).

The tract at residues 54–89 (AADSVSPDSQRPGKKPFKFIVSNQSKSSKASKSPKW) is disordered. Residues 75 to 89 (SNQSKSSKASKSPKW) are compositionally biased toward low complexity. Residues Cys-178, Cys-242, and Cys-244 each contribute to the Fe cation site.

The protein belongs to the HesB/IscA family.

Its subcellular location is the mitochondrion matrix. Functionally, involved in the assembly of mitochondrial and cytoplasmic iron-sulfur proteins. Probably involved in the binding of an intermediate of Fe/S cluster assembly. The sequence is that of Iron-sulfur assembly protein 1 (ISA1) from Saccharomyces cerevisiae (strain ATCC 204508 / S288c) (Baker's yeast).